A 196-amino-acid polypeptide reads, in one-letter code: uncharacterized protein (196 aa).

The protein to E.coli YjaG.

This is an uncharacterized protein from Haemophilus influenzae (strain ATCC 51907 / DSM 11121 / KW20 / Rd).